Reading from the N-terminus, the 205-residue chain is Probable thymidylate kinase (205 aa).

Residue 9–16 coordinates ATP; it reads GIDGVGKS.

It belongs to the thymidylate kinase family.

It catalyses the reaction dTMP + ATP = dTDP + ADP. This chain is Probable thymidylate kinase, found in Caldivirga maquilingensis (strain ATCC 700844 / DSM 13496 / JCM 10307 / IC-167).